The primary structure comprises 426 residues: Monocarboxylate transporter 13 (426 aa).

The Cytoplasmic portion of the chain corresponds to 1–10 (MAYRAEPPDG). The next 12 helical transmembrane spans lie at 11-31 (GWGW…FGVL), 52-72 (VSWI…VGSA), 83-103 (VMTG…ATSL), 106-126 (LYLS…TPTL), 139-159 (LAMG…APLF), 172-192 (LLLV…LRPL), 221-241 (VALT…VAHL), 244-264 (LGWD…SDLV), 283-303 (LLML…VAEA), 306-326 (GLVA…PVAF), 338-358 (IYCG…LGAP), and 374-394 (FVVA…LPHF). Over 395–426 (FCFSAPTSKPQDLVTEALDTKVPLPEEGLGED) the chain is Cytoplasmic.

It belongs to the major facilitator superfamily. Monocarboxylate porter (TC 2.A.1.13) family.

The protein resides in the golgi apparatus membrane. It is found in the cell membrane. Its function is as follows. Proton-linked monocarboxylate transporter. May catalyze the transport of monocarboxylates across the plasma membrane. This Bos taurus (Bovine) protein is Monocarboxylate transporter 13 (SLC16A13).